Here is a 583-residue protein sequence, read N- to C-terminus: Phytoene desaturase (583 aa).

Positions 1–20 are cleaved as a signal peptide; the sequence is MAPPKHVIIIGAGAGGTATA. A helical membrane pass occupies residues 531-551; that stretch reads IIWFLLIALFAATLVLFIAFP.

This sequence belongs to the carotenoid/retinoid oxidoreductase family. NAD(+) is required as a cofactor.

It is found in the membrane. The enzyme catalyses 15-cis-phytoene + 5 A = all-trans-3,4-didehydrolycopene + 5 AH2. The protein operates within carotenoid biosynthesis; lycopene biosynthesis. Functionally, phytoene desaturase involved in the carotenoid biosynthesis pathway. Converts phytoene into 3,4-didehydrolycopene via the intermediary of phytofluene, zeta-carotene, neurosporene and lycopene, by introducing up to five double bonds into phytoene. This chain is Phytoene desaturase (carB), found in Phycomyces blakesleeanus (strain ATCC 8743b / DSM 1359 / FGSC 10004 / NBRC 33097 / NRRL 1555).